Consider the following 514-residue polypeptide: Histidine ammonia-lyase (514 aa).

A cross-link (5-imidazolinone (Ala-Gly)) is located at residues 143-145; the sequence is ASG. Ser144 bears the 2,3-didehydroalanine (Ser) mark.

It belongs to the PAL/histidase family. In terms of processing, contains an active site 4-methylidene-imidazol-5-one (MIO), which is formed autocatalytically by cyclization and dehydration of residues Ala-Ser-Gly.

It localises to the cytoplasm. It catalyses the reaction L-histidine = trans-urocanate + NH4(+). Its pathway is amino-acid degradation; L-histidine degradation into L-glutamate; N-formimidoyl-L-glutamate from L-histidine: step 1/3. The protein is Histidine ammonia-lyase of Photorhabdus laumondii subsp. laumondii (strain DSM 15139 / CIP 105565 / TT01) (Photorhabdus luminescens subsp. laumondii).